Reading from the N-terminus, the 247-residue chain is Geranylgeranylglyceryl phosphate synthase (247 aa).

Positions 24 and 53 each coordinate Mg(2+). Sn-glycerol 1-phosphate-binding positions include 172–178 (YLEAGSG), 203–204 (GG), and 225–226 (GT).

The protein belongs to the GGGP/HepGP synthase family. Group II subfamily. The cofactor is Mg(2+).

The protein resides in the cytoplasm. It catalyses the reaction sn-glycerol 1-phosphate + (2E,6E,10E)-geranylgeranyl diphosphate = sn-3-O-(geranylgeranyl)glycerol 1-phosphate + diphosphate. It functions in the pathway membrane lipid metabolism; glycerophospholipid metabolism. In terms of biological role, prenyltransferase that catalyzes the transfer of the geranylgeranyl moiety of geranylgeranyl diphosphate (GGPP) to the C3 hydroxyl of sn-glycerol-1-phosphate (G1P). This reaction is the first ether-bond-formation step in the biosynthesis of archaeal membrane lipids. This is Geranylgeranylglyceryl phosphate synthase from Cenarchaeum symbiosum (strain A).